We begin with the raw amino-acid sequence, 343 residues long: Flavone 3'-O-methyltransferase OMT2 (343 aa).

N107 lines the (E)-ferulate pocket. Residues G184, D207, D227, M228, M240, and K241 each contribute to the S-adenosyl-L-homocysteine site. H245 functions as the Proton acceptor in the catalytic mechanism. D246 lines the (E)-5-hydroxyferulate pocket. Active-site residues include E273 and E305.

Belongs to the class I-like SAM-binding methyltransferase superfamily. Cation-independent O-methyltransferase family. COMT subfamily. Homodimer.

The catalysed reaction is (E)-5-hydroxyferulate + S-adenosyl-L-methionine = (E)-sinapate + S-adenosyl-L-homocysteine + H(+). It carries out the reaction luteolin + S-adenosyl-L-methionine = chrysoeriol + S-adenosyl-L-homocysteine + H(+). It catalyses the reaction quercetin + S-adenosyl-L-methionine = isorhamnetin + S-adenosyl-L-homocysteine + H(+). The enzyme catalyses (E)-caffeate + S-adenosyl-L-methionine = (E)-ferulate + S-adenosyl-L-homocysteine + H(+). The catalysed reaction is a 3'-hydroxyflavone + S-adenosyl-L-methionine = a 3'-methoxyflavone + S-adenosyl-L-homocysteine + H(+). It participates in flavonoid metabolism. Its function is as follows. Catalyzes the 3'-O-methylation of the flavonoids luteolin and quercetin. Catalyzes the 3- of 5-O-methylation of the phenylpropanoids caffeate and 5-hydroxyferulate. Substrate preference is 5-hydroxyferulate &gt; luteolin &gt; quercetin &gt; caffeate. Apigenin, kempferol and 3,4-dimethylquercetin do not seem to be substrates for methylation. In Chrysosplenium americanum (American golden saxifrage), this protein is Flavone 3'-O-methyltransferase OMT2.